A 199-amino-acid chain; its full sequence is Ras-related and estrogen-regulated growth inhibitor (199 aa).

Residues 13–20 (GRAGVGKS), 60–64 (DTAGQ), and 118–121 (NKAD) contribute to the GTP site.

The protein belongs to the small GTPase superfamily. Ras family.

It is found in the cytoplasm. The catalysed reaction is GTP + H2O = GDP + phosphate + H(+). Binds GDP/GTP and possesses intrinsic GTPase activity. Has higher affinity for GDP than for GTP. This chain is Ras-related and estrogen-regulated growth inhibitor (RERG), found in Bos taurus (Bovine).